Reading from the N-terminus, the 443-residue chain is ATP-dependent protease ATPase subunit HslU (443 aa).

ATP contacts are provided by residues Val18, 60-65, Asp255, Glu321, and Arg393; that span reads GVGKTE.

Belongs to the ClpX chaperone family. HslU subfamily. As to quaternary structure, a double ring-shaped homohexamer of HslV is capped on each side by a ring-shaped HslU homohexamer. The assembly of the HslU/HslV complex is dependent on binding of ATP.

Its subcellular location is the cytoplasm. Functionally, ATPase subunit of a proteasome-like degradation complex; this subunit has chaperone activity. The binding of ATP and its subsequent hydrolysis by HslU are essential for unfolding of protein substrates subsequently hydrolyzed by HslV. HslU recognizes the N-terminal part of its protein substrates and unfolds these before they are guided to HslV for hydrolysis. This chain is ATP-dependent protease ATPase subunit HslU, found in Colwellia psychrerythraea (strain 34H / ATCC BAA-681) (Vibrio psychroerythus).